The following is a 181-amino-acid chain: Protein GrpE (181 aa).

The interval 1-21 is disordered; that stretch reads MNKEQQDLQTEQEAAVETAEL. The span at 8–21 shows a compositional bias: low complexity; that stretch reads LQTEQEAAVETAEL.

The protein belongs to the GrpE family. In terms of assembly, homodimer.

It is found in the cytoplasm. Its function is as follows. Participates actively in the response to hyperosmotic and heat shock by preventing the aggregation of stress-denatured proteins, in association with DnaK and GrpE. It is the nucleotide exchange factor for DnaK and may function as a thermosensor. Unfolded proteins bind initially to DnaJ; upon interaction with the DnaJ-bound protein, DnaK hydrolyzes its bound ATP, resulting in the formation of a stable complex. GrpE releases ADP from DnaK; ATP binding to DnaK triggers the release of the substrate protein, thus completing the reaction cycle. Several rounds of ATP-dependent interactions between DnaJ, DnaK and GrpE are required for fully efficient folding. The chain is Protein GrpE from Trichlorobacter lovleyi (strain ATCC BAA-1151 / DSM 17278 / SZ) (Geobacter lovleyi).